A 696-amino-acid polypeptide reads, in one-letter code: DNA ligase (696 aa).

Residues 55–59 (DYEFD), 105–106 (SL), and Glu137 contribute to the NAD(+) site. Lys139 acts as the N6-AMP-lysine intermediate in catalysis. Residues Arg160, Glu194, Lys310, and Lys334 each coordinate NAD(+). Zn(2+)-binding residues include Cys428, Cys431, Cys446, and Cys451. The region spanning 615-696 (NVNPNFVGKN…EFIELKDKFD (82 aa)) is the BRCT domain.

The protein belongs to the NAD-dependent DNA ligase family. LigA subfamily. Requires Mg(2+) as cofactor. Mn(2+) is required as a cofactor.

It catalyses the reaction NAD(+) + (deoxyribonucleotide)n-3'-hydroxyl + 5'-phospho-(deoxyribonucleotide)m = (deoxyribonucleotide)n+m + AMP + beta-nicotinamide D-nucleotide.. Its function is as follows. DNA ligase that catalyzes the formation of phosphodiester linkages between 5'-phosphoryl and 3'-hydroxyl groups in double-stranded DNA using NAD as a coenzyme and as the energy source for the reaction. It is essential for DNA replication and repair of damaged DNA. The polypeptide is DNA ligase (Fusobacterium nucleatum subsp. nucleatum (strain ATCC 25586 / DSM 15643 / BCRC 10681 / CIP 101130 / JCM 8532 / KCTC 2640 / LMG 13131 / VPI 4355)).